A 190-amino-acid chain; its full sequence is Adenylate kinase (190 aa).

10-15 serves as a coordination point for ATP; it reads AAGKGT. The tract at residues 30–59 is NMP; that stretch reads STGDMLRAAIASGSELGQRVSGIMERGELV. AMP contacts are provided by residues T31, R36, 57-59, 85-88, and Q92; these read ELV and GFPR. Positions 126 to 136 are LID; sequence GRFAESGRADD. R127 contributes to the ATP binding site. AMP contacts are provided by R133 and R144. G172 contributes to the ATP binding site.

This sequence belongs to the adenylate kinase family. As to quaternary structure, monomer.

It is found in the cytoplasm. The enzyme catalyses AMP + ATP = 2 ADP. It functions in the pathway purine metabolism; AMP biosynthesis via salvage pathway; AMP from ADP: step 1/1. Catalyzes the reversible transfer of the terminal phosphate group between ATP and AMP. Plays an important role in cellular energy homeostasis and in adenine nucleotide metabolism. In Phenylobacterium zucineum (strain HLK1), this protein is Adenylate kinase.